Here is a 314-residue protein sequence, read N- to C-terminus: Dihydroorotate dehydrogenase (fumarate) (314 aa).

Substrate is bound by residues Lys-46, 70-74 (NSMGL), and Asn-130. Residue 46–47 (KS) coordinates FMN. FMN is bound at residue Asn-130. Residues Ser-132 and Cys-133 each act as nucleophile in the active site. FMN-binding residues include Lys-167 and Ile-195. 196–197 (NS) contributes to the substrate binding site. FMN contacts are provided by residues Gly-224, 252 to 253 (GG), and 274 to 275 (GT).

This sequence belongs to the dihydroorotate dehydrogenase family. Type 1 subfamily. Homodimer. It depends on FMN as a cofactor.

Its subcellular location is the cytoplasm. The enzyme catalyses (S)-dihydroorotate + fumarate = orotate + succinate. The protein operates within pyrimidine metabolism; UMP biosynthesis via de novo pathway. Its function is as follows. Catalyzes the conversion of dihydroorotate to orotate with fumarate as the electron acceptor. The chain is Dihydroorotate dehydrogenase (fumarate) (URA1) from Saccharomyces paradoxus (Yeast).